We begin with the raw amino-acid sequence, 640 residues long: GATA zinc finger domain-containing protein 12 (640 aa).

Disordered regions lie at residues 121-209 (SNNI…NIPI) and 355-390 (QQIR…HINN). Composition is skewed to low complexity over residues 122-209 (NNIP…NIPI) and 355-379 (QQIR…QHQQ). A compositionally biased stretch (polar residues) spans 380-390 (PPTNIPQHINN). A GATA-type zinc finger spans residues 506–531 (CVNCKTSDTPEWRRGPQGAKTLCNAC).

In Dictyostelium discoideum (Social amoeba), this protein is GATA zinc finger domain-containing protein 12 (gtaL).